Here is a 286-residue protein sequence, read N- to C-terminus: Beta-lactamase SHV-34 (286 aa).

A signal peptide spans 1–21 (MRYFRLCIISLLATLPLAVHA). Catalysis depends on Ser-66, which acts as the Acyl-ester intermediate. Cys-73 and Cys-119 are disulfide-bonded. The Proton acceptor role is filled by Glu-164. 230 to 232 (KTG) provides a ligand contact to substrate.

It belongs to the class-A beta-lactamase family.

The enzyme catalyses a beta-lactam + H2O = a substituted beta-amino acid. Functionally, hydrolyzes ceftazidime and cefotaxime. This chain is Beta-lactamase SHV-34 (bla), found in Escherichia coli.